Here is a 241-residue protein sequence, read N- to C-terminus: tRNA (guanine-N(7)-)-methyltransferase (241 aa).

Residues 1–20 (MTESNDTPIQPEAGDERQHR) are disordered. The S-adenosyl-L-methionine site is built by Glu-71, Glu-96, Asp-123, and Asp-146. Asp-146 is an active-site residue. Residues Lys-150, Asp-182, and 219 to 222 (TKFE) each bind substrate.

The protein belongs to the class I-like SAM-binding methyltransferase superfamily. TrmB family.

The enzyme catalyses guanosine(46) in tRNA + S-adenosyl-L-methionine = N(7)-methylguanosine(46) in tRNA + S-adenosyl-L-homocysteine. It participates in tRNA modification; N(7)-methylguanine-tRNA biosynthesis. Catalyzes the formation of N(7)-methylguanine at position 46 (m7G46) in tRNA. The sequence is that of tRNA (guanine-N(7)-)-methyltransferase from Pseudomonas fluorescens (strain ATCC BAA-477 / NRRL B-23932 / Pf-5).